A 573-amino-acid polypeptide reads, in one-letter code: Chaperone Ric-8 (573 aa).

A compositionally biased stretch (basic and acidic residues) spans 308 to 324 (ESHKEREQDNEKEKDTE). Disordered stretches follow at residues 308–329 (ESHK…GAGA) and 473–493 (GTDY…QQQQ). Ser477, Ser478, Ser480, and Ser483 each carry phosphoserine.

The protein belongs to the synembryn family. As to quaternary structure, interacts with GDP-bound G(i)-alpha protein G-i-alpha-65A. Does not interact with G-alpha proteins when they are in complex with subunits beta and gamma. Interacts with Frq2 in a Ca(2+)-independent manner but does not interact with Frq1. Expression in the embryo is primarily neural.

It is found in the cytoplasm. The protein localises to the cell cortex. It localises to the presynapse. Chaperone that specifically binds and folds some, but not all, nascent G alpha proteins prior to G protein heterotrimer formation, promoting their stability and activity. Also acts as a guanine nucleotide exchange factor (GEF) for G alpha proteins by stimulating exchange of bound GDP for free GTP. Plays a key role in asymmetric spindle positioning, a step for asymmetric cell division that generates cell diversity during development by activating G(i) alpha protein independently of G-protein coupled receptors. Required during gastrulation and sensory organ precursor (SOP) formation. Plays a role in positively regulating synapse number and neurotransmitter release. The polypeptide is Chaperone Ric-8 (ric8a) (Drosophila melanogaster (Fruit fly)).